Consider the following 194-residue polypeptide: Imidazoleglycerol-phosphate dehydratase (194 aa).

Belongs to the imidazoleglycerol-phosphate dehydratase family.

The protein resides in the cytoplasm. It catalyses the reaction D-erythro-1-(imidazol-4-yl)glycerol 3-phosphate = 3-(imidazol-4-yl)-2-oxopropyl phosphate + H2O. It participates in amino-acid biosynthesis; L-histidine biosynthesis; L-histidine from 5-phospho-alpha-D-ribose 1-diphosphate: step 6/9. The sequence is that of Imidazoleglycerol-phosphate dehydratase from Bacillus anthracis (strain A0248).